The following is a 313-amino-acid chain: MELPDVQSSLPEVRINLTRVGVKNVQKLVEVARPGKRPVIFISNFDVFVDLPGSLKGANLSRNFEVIDDVLQQAIDGDVNEIEELCSAVARKLLDRHEYAERTEVRMRSKFMVRRETPVSETSCHEVVNVHAKAIAQRNEGDPIIRKSIGAEVTGMTACPCAQNIMKDHALHVLENLGVAEDKIEAFFNEVPMATHNQRGRGFLCIEIDDDQHISLEKIIKILKDSMSARIYELLKRGDESYVVMEAHKNPRFVEDCVREMARKVIAQFHDLPGDSVVTIKQTNEESIHQHNAYAERKATIAELVSEMDKGTL.

It belongs to the GTP cyclohydrolase IV family. Homodimer. It depends on Fe(2+) as a cofactor.

The enzyme catalyses GTP + H2O = 7,8-dihydroneopterin 2',3'-cyclic phosphate + formate + diphosphate + H(+). It functions in the pathway cofactor biosynthesis; 5,6,7,8-tetrahydromethanopterin biosynthesis. Converts GTP to 7,8-dihydro-D-neopterin 2',3'-cyclic phosphate, the first intermediate in the biosynthesis of coenzyme methanopterin. The polypeptide is GTP cyclohydrolase MptA (Methanoculleus marisnigri (strain ATCC 35101 / DSM 1498 / JR1)).